We begin with the raw amino-acid sequence, 288 residues long: Beta-lactamase PSE-4 (288 aa).

The signal sequence occupies residues 1–17; sequence MKFLLAFSLLIPSVVFA. Residue Ser-65 is the Acyl-ester intermediate of the active site. A disulfide bridge links Cys-72 with Cys-118. Residue 229–231 participates in substrate binding; it reads RSG.

This sequence belongs to the class-A beta-lactamase family.

The catalysed reaction is a beta-lactam + H2O = a substituted beta-amino acid. Its function is as follows. Hydrolyzes both carbenicillin and oxacillin. This Pseudomonas aeruginosa protein is Beta-lactamase PSE-4 (pse4).